Reading from the N-terminus, the 165-residue chain is Disulfide bond formation protein B (165 aa).

The Cytoplasmic segment spans residues M1–I10. The chain crosses the membrane as a helical span at residues Y11–Y27. Residues L28 to I45 are Periplasmic-facing. A disulfide bond links C37 and C40. The helical transmembrane segment at A46–P62 threads the bilayer. Over K63–T68 the chain is Cytoplasmic. The helical transmembrane segment at V69–T86 threads the bilayer. The Periplasmic segment spans residues R87–G143. The cysteines at positions 102 and 129 are disulfide-linked. The chain crosses the membrane as a helical span at residues W144–R162. Over R163–R165 the chain is Cytoplasmic.

The protein belongs to the DsbB family.

The protein localises to the cell inner membrane. Its function is as follows. Required for disulfide bond formation in some periplasmic proteins. Acts by oxidizing the DsbA protein. This Hahella chejuensis (strain KCTC 2396) protein is Disulfide bond formation protein B.